We begin with the raw amino-acid sequence, 583 residues long: Ankyrin repeat and SOCS box protein 15 (583 aa).

ANK repeat units lie at residues 75–104 (KGWF…KTLW), 110–139 (DGET…WPNT), 143–172 (KGET…SLDQ), 176–205 (KRWS…NVHL), 209–238 (FGVT…DVFA), 242–271 (DGAS…SGNV), 275–304 (AGHL…KHAI), 307–336 (SGLT…DVNA), 349–378 (ERKT…DPNL), 379–408 (DPLN…NVNC), and 416–444 (TRFP…QVEL). The 56-residue stretch at 524 to 579 (WPEIRQIIENPCSLKHLCRLKIRRVMGLQRLCQPASIQMLPLPAAMRRYLLFKEFD) folds into the SOCS box domain.

It belongs to the ankyrin SOCS box (ASB) family.

It functions in the pathway protein modification; protein ubiquitination. Its function is as follows. May be a substrate-recognition component of a SCF-like ECS (Elongin-Cullin-SOCS-box protein) E3 ubiquitin-protein ligase complex which mediates the ubiquitination and subsequent proteasomal degradation of target proteins. The protein is Ankyrin repeat and SOCS box protein 15 (Asb15) of Mus musculus (Mouse).